Consider the following 348-residue polypeptide: Dihydroorotase (348 aa).

Positions 17 and 19 each coordinate Zn(2+). Substrate contacts are provided by residues 19-21 and asparagine 45; that span reads HLR. Residues lysine 103, histidine 140, and histidine 178 each contribute to the Zn(2+) site. At lysine 103 the chain carries N6-carboxylysine. Histidine 140 contributes to the substrate binding site. Leucine 223 serves as a coordination point for substrate. Aspartate 251 serves as a coordination point for Zn(2+). The active site involves aspartate 251. Substrate-binding residues include histidine 255 and alanine 267.

Belongs to the metallo-dependent hydrolases superfamily. DHOase family. Class II DHOase subfamily. As to quaternary structure, homodimer. The cofactor is Zn(2+).

The enzyme catalyses (S)-dihydroorotate + H2O = N-carbamoyl-L-aspartate + H(+). The protein operates within pyrimidine metabolism; UMP biosynthesis via de novo pathway; (S)-dihydroorotate from bicarbonate: step 3/3. Its function is as follows. Catalyzes the reversible cyclization of carbamoyl aspartate to dihydroorotate. The chain is Dihydroorotase from Escherichia coli O6:K15:H31 (strain 536 / UPEC).